A 156-amino-acid polypeptide reads, in one-letter code: Arginine repressor (156 aa).

The protein belongs to the ArgR family.

Its subcellular location is the cytoplasm. It participates in amino-acid biosynthesis; L-arginine biosynthesis [regulation]. Regulates arginine biosynthesis genes. The chain is Arginine repressor from Shewanella sp. (strain ANA-3).